Here is a 732-residue protein sequence, read N- to C-terminus: Aldehyde oxidoreductase molybdenum-binding subunit PaoC (732 aa).

Residues 241–242 (GF), 468–470 (IGT), 511–512 (GA), 615–621 (RILNPKT), glutamine 625, and 688–691 (KGVG) each bind Mo-molybdopterin cytosine dinucleotide. Glutamate 692 functions as the Proton acceptor in the catalytic mechanism.

This sequence belongs to the xanthine dehydrogenase family. As to quaternary structure, heterotrimer composed of PaoA, PaoB and PaoC. The cofactor is Mo-molybdopterin cytosine dinucleotide.

It localises to the periplasm. The catalysed reaction is an aldehyde + A + H2O = a carboxylate + AH2 + H(+). Functionally, oxidizes aldehydes to the corresponding carboxylic acids with a preference for aromatic aldehydes. It might play a role in the detoxification of aldehydes to avoid cell damage. In Escherichia coli O157:H7, this protein is Aldehyde oxidoreductase molybdenum-binding subunit PaoC.